The sequence spans 281 residues: Pantothenate synthetase (281 aa).

Residue 30 to 37 coordinates ATP; the sequence is MGYLHEGH. The active-site Proton donor is the His37. Residue Gln60 coordinates (R)-pantoate. Beta-alanine is bound at residue Gln60. Residue 146–149 coordinates ATP; that stretch reads GEKD. Residue Gln152 coordinates (R)-pantoate. ATP contacts are provided by residues Ile175 and 183 to 186; that span reads KSSR.

The protein belongs to the pantothenate synthetase family. As to quaternary structure, homodimer.

It is found in the cytoplasm. The enzyme catalyses (R)-pantoate + beta-alanine + ATP = (R)-pantothenate + AMP + diphosphate + H(+). The protein operates within cofactor biosynthesis; (R)-pantothenate biosynthesis; (R)-pantothenate from (R)-pantoate and beta-alanine: step 1/1. Its function is as follows. Catalyzes the condensation of pantoate with beta-alanine in an ATP-dependent reaction via a pantoyl-adenylate intermediate. In Ruminiclostridium cellulolyticum (strain ATCC 35319 / DSM 5812 / JCM 6584 / H10) (Clostridium cellulolyticum), this protein is Pantothenate synthetase.